Reading from the N-terminus, the 550-residue chain is Membrane protein insertase YidC (550 aa).

Residues 6-26 (LIVFIVLSFGLLFVWQEYFAP) traverse the membrane as a helical segment. A disordered region spans residues 30 to 59 (PKPVAAAVQPDGTPAPATARPADSPATGKL). A run of 4 helical transmembrane segments spans residues 360–380 (WGWAIVLLTVLVKAAFYPLSA), 430–450 (LPIVVQIPVFIGLYWALLASV), 472–492 (ILPALMAATMYLQTFLNPPPA), and 504–524 (PLAFSVMFFFFPAGLVLYWLV).

This sequence belongs to the OXA1/ALB3/YidC family. Type 1 subfamily. As to quaternary structure, interacts with the Sec translocase complex via SecD. Specifically interacts with transmembrane segments of nascent integral membrane proteins during membrane integration.

It localises to the cell inner membrane. Functionally, required for the insertion and/or proper folding and/or complex formation of integral membrane proteins into the membrane. Involved in integration of membrane proteins that insert both dependently and independently of the Sec translocase complex, as well as at least some lipoproteins. Aids folding of multispanning membrane proteins. This Laribacter hongkongensis (strain HLHK9) protein is Membrane protein insertase YidC.